A 336-amino-acid polypeptide reads, in one-letter code: Flap endonuclease 1 (336 aa).

The tract at residues 1–98 (MGADIGDLFE…AEIEERKKRR (98 aa)) is N-domain. Residues aspartate 27, aspartate 80, glutamate 151, glutamate 153, aspartate 172, aspartate 174, and aspartate 235 each contribute to the Mg(2+) site. Residues 115-256 (DAKKYAQAAG…KALNYIKTYG (142 aa)) are I-domain. Positions 328-336 (TQATLERWF) are interaction with PCNA.

Belongs to the XPG/RAD2 endonuclease family. FEN1 subfamily. In terms of assembly, interacts with PCNA. PCNA stimulates the nuclease activity without altering cleavage specificity. Mg(2+) is required as a cofactor.

Functionally, structure-specific nuclease with 5'-flap endonuclease and 5'-3' exonuclease activities involved in DNA replication and repair. During DNA replication, cleaves the 5'-overhanging flap structure that is generated by displacement synthesis when DNA polymerase encounters the 5'-end of a downstream Okazaki fragment. Binds the unpaired 3'-DNA end and kinks the DNA to facilitate 5' cleavage specificity. Cleaves one nucleotide into the double-stranded DNA from the junction in flap DNA, leaving a nick for ligation. Also involved in the base excision repair (BER) pathway. Acts as a genome stabilization factor that prevents flaps from equilibrating into structures that lead to duplications and deletions. Also possesses 5'-3' exonuclease activity on nicked or gapped double-stranded DNA. This is Flap endonuclease 1 from Archaeoglobus fulgidus (strain ATCC 49558 / DSM 4304 / JCM 9628 / NBRC 100126 / VC-16).